The primary structure comprises 181 residues: Isopentenyl-diphosphate Delta-isomerase (181 aa).

Residues H25 and H32 each coordinate Mn(2+). One can recognise a Nudix hydrolase domain in the interval 30 to 164 (PLHLAFSCWL…PWAFSPWMVM (135 aa)). C67 is a catalytic residue. Position 69 (H69) interacts with Mn(2+). Residue E87 coordinates Mg(2+). Residues E114 and E116 each coordinate Mn(2+). E116 is an active-site residue.

This sequence belongs to the IPP isomerase type 1 family. Homodimer. The cofactor is Mg(2+). Mn(2+) serves as cofactor.

It localises to the cytoplasm. It carries out the reaction isopentenyl diphosphate = dimethylallyl diphosphate. Its pathway is isoprenoid biosynthesis; dimethylallyl diphosphate biosynthesis; dimethylallyl diphosphate from isopentenyl diphosphate: step 1/1. Catalyzes the 1,3-allylic rearrangement of the homoallylic substrate isopentenyl (IPP) to its highly electrophilic allylic isomer, dimethylallyl diphosphate (DMAPP). The sequence is that of Isopentenyl-diphosphate Delta-isomerase from Salmonella paratyphi B (strain ATCC BAA-1250 / SPB7).